The primary structure comprises 126 residues: Probable small nuclear ribonucleoprotein Sm D1 (126 aa).

Residues 2–74 (KLVRFLMKLS…IRYIILPDPL (73 aa)) enclose the Sm domain. The tract at residues 86 to 126 (RKKARAARAGASRGRGRGGMRGGRGGRGRGRGGPRGGGPRR) is disordered. Residues 99–126 (GRGRGGMRGGRGGRGRGRGGPRGGGPRR) are compositionally biased toward basic residues.

The protein belongs to the snRNP core protein family.

The protein localises to the nucleus. It localises to the cytoplasm. The protein resides in the cytosol. Functionally, plays a role in pre-mRNA splicing as a core component of the spliceosomal U1, U2, U4 and U5 small nuclear ribonucleoproteins (snRNPs), the building blocks of the spliceosome. This chain is Probable small nuclear ribonucleoprotein Sm D1 (snr-3), found in Caenorhabditis elegans.